The sequence spans 254 residues: Large ribosomal subunit protein uL4 (254 aa).

A disordered region spans residues 45-70; that stretch reads PWGNDPEAGKRTSAKGWGSGRGTARV.

The protein belongs to the universal ribosomal protein uL4 family. As to quaternary structure, part of the 50S ribosomal subunit.

In terms of biological role, one of the primary rRNA binding proteins, this protein initially binds near the 5'-end of the 23S rRNA. It is important during the early stages of 50S assembly. It makes multiple contacts with different domains of the 23S rRNA in the assembled 50S subunit and ribosome. Its function is as follows. Forms part of the polypeptide exit tunnel. This Methanobrevibacter smithii (strain ATCC 35061 / DSM 861 / OCM 144 / PS) protein is Large ribosomal subunit protein uL4.